The following is a 287-amino-acid chain: Protein UL24 homolog (287 aa).

Disordered stretches follow at residues 1-33 (MARRRKEVQRGESRSHRSRTRSKTAHHRKFSRR) and 254-287 (RVGKESATKPASYSTSTEESKNLSEPCFDPDSNL). Positions 16 to 33 (HRSRTRSKTAHHRKFSRR) are enriched in basic residues.

Belongs to the herpesviridae UL24 family.

The protein localises to the virion. Its subcellular location is the host cytoplasm. The protein resides in the host nucleus. It localises to the host nucleolus. It is found in the host Golgi apparatus. In terms of biological role, may participate in nuclear egress of viral particles. Plays a role in the dispersal of several host nucleolar proteins including NCL/nucleolin and NPM1. Since deletion of host NCL/nucleolin negatively impact on nuclear egress, UL24 supposedly acts on this process through its effect on host nucleoli. The chain is Protein UL24 homolog from Infectious laryngotracheitis virus (strain Thorne V882) (ILTV).